The chain runs to 597 residues: Elongation factor 4 (597 aa).

Residues 2–184 (KHIRNFSIIA…TIVKCIPAPE (183 aa)) enclose the tr-type G domain. Residues 14 to 19 (DHGKST) and 131 to 134 (NKID) each bind GTP.

It belongs to the TRAFAC class translation factor GTPase superfamily. Classic translation factor GTPase family. LepA subfamily.

The protein localises to the cell inner membrane. The catalysed reaction is GTP + H2O = GDP + phosphate + H(+). Functionally, required for accurate and efficient protein synthesis under certain stress conditions. May act as a fidelity factor of the translation reaction, by catalyzing a one-codon backward translocation of tRNAs on improperly translocated ribosomes. Back-translocation proceeds from a post-translocation (POST) complex to a pre-translocation (PRE) complex, thus giving elongation factor G a second chance to translocate the tRNAs correctly. Binds to ribosomes in a GTP-dependent manner. The protein is Elongation factor 4 of Aliivibrio salmonicida (strain LFI1238) (Vibrio salmonicida (strain LFI1238)).